The primary structure comprises 480 residues: MKKLLMVQGTTSDAGKSVLVAGLCRVLARKGVKVAPFKPQNMALNSAVTKEGGEIGRAQAVQAQACRIEPSVHMNPVLIKPNSDTGAQIILQGKALTNMDAYGFHNYKKVAMDTVMDSFARLKDEYQAIMIEGAGSPAEINLRQNDIANMGFAEEADVPVIIVADIDRGGVFAHLYGTLALLSPSEQARVKGFVINRFRGDIKLLESGLDWLEEKTGKPVIGVLPFLHGLNLEAEDAITSQQALSDEVKLKVVVPVLTRISNHTDFDVLRLHPQIDLRYVGKGERLEHADLIILPGSKSVRDDLRYLREQGWDKDILRHLRFGGKVLGICGGYQMLGESIRDPFGVEGEPGESVGLGLLKTRTELTQDKCLINTKGQLSLNGKHVNVTGYEIHVGRSQVNEYQPITKDDGQLEGALSECGQIMGSYLHGFLDSEAALELICEWVNGVRIKAQNHQQLKEQAIDRIADAIEEHLDLSQLGI.

The region spanning 249 to 436 is the GATase cobBQ-type domain; the sequence is KLKVVVPVLT…LHGFLDSEAA (188 aa). Cys-330 functions as the Nucleophile in the catalytic mechanism. Residue His-428 is part of the active site.

The protein belongs to the CobB/CobQ family. CobQ subfamily.

Its pathway is cofactor biosynthesis; adenosylcobalamin biosynthesis. Its function is as follows. Catalyzes amidations at positions B, D, E, and G on adenosylcobyrinic A,C-diamide. NH(2) groups are provided by glutamine, and one molecule of ATP is hydrogenolyzed for each amidation. The chain is Cobyric acid synthase from Vibrio vulnificus (strain YJ016).